The following is a 337-amino-acid chain: m7GpppX diphosphatase (337 aa).

The tract at residues 1–35 (MADAAPQLGKRKRELDVEEAHAASTEEKEAGVGNG) is disordered. An N-acetylalanine modification is found at Ala-2. Positions 10–13 (KRKR) match the nuclear localization signal (NLS) motif. Residues 13–30 (RELDVEEAHAASTEEKEA) are compositionally biased toward basic and acidic residues. Residues Ser-24 and Ser-101 each carry the phosphoserine modification. Lys-138 and Lys-142 each carry N6-acetyllysine. Residues 142–154 (KYLRQDLRLIRET) carry the nuclear export sequence (NES) motif. Residues Trp-175, Glu-185, Asp-205, Lys-207, and 268–279 (HYLPSYYHLHVH) contribute to the substrate site. The short motif at 275–279 (HLHVH) is the Histidine triad motif element. His-277 (nucleophile) is an active-site residue.

It belongs to the HIT family. In terms of assembly, homodimer. Associates with components of the exosome multienzyme ribonuclease complex, such as EXOSC3 and EXOSC4. Interacts with NDOR1. As to expression, detected in liver, brain, kidney, testis and prostate.

It is found in the cytoplasm. The protein localises to the nucleus. The catalysed reaction is a 5'-end (N(7)-methyl 5'-triphosphoguanosine)-ribonucleoside in mRNA + H2O = N(7)-methyl-GMP + a 5'-end diphospho-ribonucleoside in mRNA + 2 H(+). With respect to regulation, the hydrolytic product 7-methylguanosine diphosphate (m7GDP) efficiently inhibits the decapping scavenger activity and acts as a competitive inhibitor in vitro. Inhibited by 2,4-diaminoquinazoline. In terms of biological role, decapping scavenger enzyme that catalyzes the cleavage of a residual cap structure following the degradation of mRNAs by the 3'-&gt;5' exosome-mediated mRNA decay pathway. Hydrolyzes cap analog structures like 7-methylguanosine nucleoside triphosphate (m7GpppG) with up to 10 nucleotide substrates (small capped oligoribonucleotides) and specifically releases 5'-phosphorylated RNA fragments and 7-methylguanosine monophosphate (m7GMP). Cleaves cap analog structures like tri-methyl guanosine nucleoside triphosphate (m3(2,2,7)GpppG) with very poor efficiency. Does not hydrolyze unmethylated cap analog (GpppG) and shows no decapping activity on intact m7GpppG-capped mRNA molecules longer than 25 nucleotides. Does not hydrolyze 7-methylguanosine diphosphate (m7GDP) to m7GMP. May also play a role in the 5'-&gt;3 mRNA decay pathway; m7GDP, the downstream product released by the 5'-&gt;3' mRNA mediated decapping activity, may be also converted by DCPS to m7GMP. Binds to m7GpppG and strongly to m7GDP. Plays a role in first intron splicing of pre-mRNAs. Inhibits activation-induced cell death. This is m7GpppX diphosphatase (DCPS) from Homo sapiens (Human).